The sequence spans 68 residues: MGSFSIWHWLIVLAVVLLLFGRGKIPELMGDVAKGIKNFKKGMSDEDAAAADKSIDGKTVDHKSDEVR.

Residues 1-21 (MGSFSIWHWLIVLAVVLLLFG) form a helical membrane-spanning segment. A disordered region spans residues 48-68 (AAAADKSIDGKTVDHKSDEVR). Residues 53-68 (KSIDGKTVDHKSDEVR) show a composition bias toward basic and acidic residues.

Belongs to the TatA/E family. In terms of assembly, the Tat system comprises two distinct complexes: a TatABC complex, containing multiple copies of TatA, TatB and TatC subunits, and a separate TatA complex, containing only TatA subunits. Substrates initially bind to the TatABC complex, which probably triggers association of the separate TatA complex to form the active translocon.

It localises to the cell inner membrane. In terms of biological role, part of the twin-arginine translocation (Tat) system that transports large folded proteins containing a characteristic twin-arginine motif in their signal peptide across membranes. TatA could form the protein-conducting channel of the Tat system. The protein is Sec-independent protein translocase protein TatA of Sinorhizobium medicae (strain WSM419) (Ensifer medicae).